The sequence spans 113 residues: MTRPTIPPGPPGAEGRTQTLERTETKKPRLWRVLLLNDDYTPMDYVVQVLEQFFRKTEQEAELIMLAVHHKGQGVAGVYTRDVAETKVAQVTAHAQREGHPLRVVAEPESEGE.

Positions 1 to 11 are enriched in pro residues; it reads MTRPTIPPGPP. Disordered stretches follow at residues 1-24 and 92-113; these read MTRP…ERTE and TAHA…SEGE.

This sequence belongs to the ClpS family. As to quaternary structure, binds to the N-terminal domain of the chaperone ClpA.

Its function is as follows. Involved in the modulation of the specificity of the ClpAP-mediated ATP-dependent protein degradation. The chain is ATP-dependent Clp protease adapter protein ClpS from Deinococcus radiodurans (strain ATCC 13939 / DSM 20539 / JCM 16871 / CCUG 27074 / LMG 4051 / NBRC 15346 / NCIMB 9279 / VKM B-1422 / R1).